Reading from the N-terminus, the 688-residue chain is Glycine--tRNA ligase beta subunit (688 aa).

This sequence belongs to the class-II aminoacyl-tRNA synthetase family. In terms of assembly, tetramer of two alpha and two beta subunits.

The protein localises to the cytoplasm. The catalysed reaction is tRNA(Gly) + glycine + ATP = glycyl-tRNA(Gly) + AMP + diphosphate. This is Glycine--tRNA ligase beta subunit from Listeria monocytogenes serotype 4a (strain HCC23).